A 420-amino-acid chain; its full sequence is Histidine--tRNA ligase (420 aa).

Belongs to the class-II aminoacyl-tRNA synthetase family. In terms of assembly, homodimer.

It is found in the cytoplasm. The catalysed reaction is tRNA(His) + L-histidine + ATP = L-histidyl-tRNA(His) + AMP + diphosphate + H(+). The protein is Histidine--tRNA ligase of Clostridioides difficile (strain 630) (Peptoclostridium difficile).